Here is a 400-residue protein sequence, read N- to C-terminus: Probable splicing factor YJU2B (400 aa).

Residues M1 to Y26 are disordered. Position 40 is a phosphoserine (S40). Positions L182–A214 form a coiled coil. The tract at residues W255–E400 is disordered. Over residues R283–V292 the composition is skewed to polar residues. S310 carries the post-translational modification Phosphoserine. Polar residues predominate over residues E327–S341. Residues P364–T380 are compositionally biased toward pro residues.

The protein belongs to the CWC16 family.

Its subcellular location is the nucleus. In terms of biological role, may be involved in mRNA splicing. In Bos taurus (Bovine), this protein is Probable splicing factor YJU2B (YJU2B).